Here is a 175-residue protein sequence, read N- to C-terminus: Ribosome maturation factor RimM (175 aa).

Residues 97–169 (EDKFYFHEII…TVRVITPEGL (73 aa)) form the PRC barrel domain.

It belongs to the RimM family. Binds ribosomal protein uS19.

It localises to the cytoplasm. An accessory protein needed during the final step in the assembly of 30S ribosomal subunit, possibly for assembly of the head region. Essential for efficient processing of 16S rRNA. May be needed both before and after RbfA during the maturation of 16S rRNA. It has affinity for free ribosomal 30S subunits but not for 70S ribosomes. In Christiangramia forsetii (strain DSM 17595 / CGMCC 1.15422 / KT0803) (Gramella forsetii), this protein is Ribosome maturation factor RimM.